Here is a 207-residue protein sequence, read N- to C-terminus: Large ribosomal subunit protein bL25 (207 aa).

Residues 171 to 207 are disordered; sequence EEETVVTVSAPRAEEEPTTTEAPEPEAVHGKDEEPVE. Positions 196–207 are enriched in basic and acidic residues; that stretch reads EAVHGKDEEPVE.

Belongs to the bacterial ribosomal protein bL25 family. CTC subfamily. As to quaternary structure, part of the 50S ribosomal subunit; part of the 5S rRNA/L5/L18/L25 subcomplex. Contacts the 5S rRNA. Binds to the 5S rRNA independently of L5 and L18.

In terms of biological role, this is one of the proteins that binds to the 5S RNA in the ribosome where it forms part of the central protuberance. In Listeria monocytogenes serotype 4b (strain F2365), this protein is Large ribosomal subunit protein bL25.